The chain runs to 210 residues: Orotate phosphoribosyltransferase (210 aa).

5-phospho-alpha-D-ribose 1-diphosphate contacts are provided by residues arginine 94, lysine 98, histidine 100, and 120 to 128 (EDLISTGGS). An orotate-binding site is contributed by serine 124.

Belongs to the purine/pyrimidine phosphoribosyltransferase family. PyrE subfamily. Homodimer. Mg(2+) is required as a cofactor.

The catalysed reaction is orotidine 5'-phosphate + diphosphate = orotate + 5-phospho-alpha-D-ribose 1-diphosphate. It participates in pyrimidine metabolism; UMP biosynthesis via de novo pathway; UMP from orotate: step 1/2. Catalyzes the transfer of a ribosyl phosphate group from 5-phosphoribose 1-diphosphate to orotate, leading to the formation of orotidine monophosphate (OMP). In Bacillus cytotoxicus (strain DSM 22905 / CIP 110041 / 391-98 / NVH 391-98), this protein is Orotate phosphoribosyltransferase.